Reading from the N-terminus, the 308-residue chain is 1,4-dihydroxy-2-naphthoate octaprenyltransferase (308 aa).

9 helical membrane-spanning segments follow: residues 22-42 (TLPL…WANP), 47-67 (GLVM…SNFA), 101-121 (WGLI…IGIA), 129-149 (FAFA…TVGV), 153-173 (GYMG…GVGG), 186-206 (IILP…INNL), 235-255 (ILLS…AISW), 256-276 (TNYL…FVYC), and 286-306 (ILAQ…LGLL).

The protein belongs to the MenA family. Type 1 subfamily.

It localises to the cell inner membrane. It carries out the reaction an all-trans-polyprenyl diphosphate + 1,4-dihydroxy-2-naphthoate + H(+) = a 2-demethylmenaquinol + CO2 + diphosphate. It functions in the pathway quinol/quinone metabolism; menaquinone biosynthesis; menaquinol from 1,4-dihydroxy-2-naphthoate: step 1/2. Conversion of 1,4-dihydroxy-2-naphthoate (DHNA) to demethylmenaquinone (DMK). The chain is 1,4-dihydroxy-2-naphthoate octaprenyltransferase from Haemophilus influenzae (strain ATCC 51907 / DSM 11121 / KW20 / Rd).